We begin with the raw amino-acid sequence, 524 residues long: Probable lipid II flippase MurJ (524 aa).

The next 13 helical transmembrane spans lie at 44 to 64 (IFGA…PNLL), 103 to 123 (LLTL…PWVI), 146 to 166 (ITFP…ILNT), 172 to 192 (IPAF…LFAA), 195 to 215 (FNPP…LQLV), 250 to 270 (ILGV…ASFL), 284 to 304 (LMEF…LPSL), 322 to 342 (WGLR…GILA), 367 to 387 (LIAY…APGF), 396 to 416 (PVKI…AFIG), 420 to 440 (HAGL…LLYW), 456 to 476 (WFLM…FGVL), and 494 to 514 (LMAV…VLGF).

This sequence belongs to the MurJ/MviN family.

It localises to the cell inner membrane. Its pathway is cell wall biogenesis; peptidoglycan biosynthesis. Involved in peptidoglycan biosynthesis. Transports lipid-linked peptidoglycan precursors from the inner to the outer leaflet of the cytoplasmic membrane. In Salmonella typhimurium (strain LT2 / SGSC1412 / ATCC 700720), this protein is Probable lipid II flippase MurJ.